A 285-amino-acid polypeptide reads, in one-letter code: Acetylglutamate kinase (285 aa).

Substrate contacts are provided by residues 63–64, Arg85, and Asn178; that span reads GG.

The protein belongs to the acetylglutamate kinase family. ArgB subfamily.

It is found in the cytoplasm. It catalyses the reaction N-acetyl-L-glutamate + ATP = N-acetyl-L-glutamyl 5-phosphate + ADP. It functions in the pathway amino-acid biosynthesis; L-arginine biosynthesis; N(2)-acetyl-L-ornithine from L-glutamate: step 2/4. Functionally, catalyzes the ATP-dependent phosphorylation of N-acetyl-L-glutamate. This chain is Acetylglutamate kinase, found in Synechococcus sp. (strain CC9311).